The sequence spans 1507 residues: Chromatin-remodeling ATPase INO80 (1507 aa).

2 disordered regions span residues 30–82 (PEDE…DAED) and 428–452 (RKKQ…KRQQ). Polar residues predominate over residues 38 to 67 (GSSSQDESRSTQGGVVANYSNGSKSRMNAS). The DBINO domain maps to 350–475 (AWINIVRRDI…SHFMQNKTDS (126 aa)). The span at 428–450 (RKKQEKEAAEAFKREQEQRESKR) shows a compositional bias: basic and acidic residues. Positions 598–769 (VNCYEQGLNG…WALLHFIMPM (172 aa)) constitute a Helicase ATP-binding domain. 611-618 (DEMGLGKT) is a binding site for ATP. The region spanning 1210 to 1360 (TLDILLKRLR…QLVMTGGHVQ (151 aa)) is the Helicase C-terminal domain. Residues 1415 to 1507 (LEELEDVDRQ…KGFDPSSSAN (93 aa)) are disordered. Positions 1491–1507 (ASVTESNKGFDPSSSAN) are enriched in polar residues.

The protein belongs to the SNF2/RAD54 helicase family. In terms of assembly, component of the INO80 chromatin-remodeling complex. Associates with REF6/EIN6.

Its subcellular location is the nucleus. It carries out the reaction ATP + H2O = ADP + phosphate + H(+). Its function is as follows. ATPase component of the chromatin remodeling INO80 complex which is involved in transcriptional regulation, DNA replication and DNA repair. Binds DNA. As part of the INO80 complex, remodels chromatin by shifting nucleosomes. The INO80 complex controls ethylene-induced H2A.Z eviction dynamics. Positive regulator of homologous recombination, but not an essential component of homologous recombination. Not involved in the illegitimate repair pathway. The protein is Chromatin-remodeling ATPase INO80 of Arabidopsis thaliana (Mouse-ear cress).